The sequence spans 1719 residues: Sodium channel protein type 4 subunit alpha B (1719 aa).

Over 1-126 (MRTLLPPVGS…IVAIKILIHS (126 aa)) the chain is Cytoplasmic. The segment at 28–50 (QQIREEERKRTNAQVSEELPEPA) is disordered. One copy of the I repeat lies at 108 to 431 (LLSPFNALRI…VVAMAYAEQN (324 aa)). A helical membrane pass occupies residues 127–145 (LFSLFIMATILTNCAFMTL). At 146–152 (SDPPAWS) the chain is on the extracellular side. The helical transmembrane segment at 153–173 (KTMEYVFTFIYTFEATIKILS) threads the bilayer. Residues 174 to 187 (RGFCVGKFTFLKDP) lie on the Cytoplasmic side of the membrane. A helical transmembrane segment spans residues 188–205 (WNWLDFMVISMAYLTELV). The Extracellular portion of the chain corresponds to 206–211 (DLGNVS). N-linked (GlcNAc...) asparagine glycosylation occurs at asparagine 209. Residues 212 to 228 (VLRTFRVLRALKTITVI) form a helical membrane-spanning segment. Topologically, residues 229-247 (PGLKTIVGALIQSVRKLAD) are cytoplasmic. The chain crosses the membrane as a helical span at residues 248 to 267 (AMVLTVFCLSVFALIGLQLF). At 268–368 (MGNLRQKCVL…PNYGYTSYDS (101 aa)) the chain is on the extracellular side. A disulfide bridge links cysteine 275 with cysteine 337. N-linked (GlcNAc...) asparagine glycosylation is found at asparagine 285 and asparagine 339. A disulfide bridge connects residues cysteine 346 and cysteine 352. Residues 369–393 (FGWAFLALFRLMTQDFWENLFQLTL) constitute an intramembrane region (pore-forming). Over 394–400 (RTAGKTY) the chain is Extracellular. A helical membrane pass occupies residues 401-421 (MIFFVVVIFLGSFYLINLILA). Over 422–513 (VVAMAYAEQN…ECLYAIVMDP (92 aa)) the chain is Cytoplasmic. An II repeat occupies 495–766 (CCGCWRHLKE…QIAINRINRA (272 aa)). Residues 514 to 532 (FVDLGITICIILNTVFMAM) form a helical membrane-spanning segment. Residues 533–543 (EHYPMSADFEE) are Extracellular-facing. The chain crosses the membrane as a helical span at residues 544-563 (LLSVGNLVFTGIFTGEMVFK). The Cytoplasmic portion of the chain corresponds to 564-577 (ILAMDPYFYFQVGW). The helical transmembrane segment at 578 to 597 (NIFDSIIVTISLVELGLANV) threads the bilayer. At 598–599 (QG) the chain is on the extracellular side. Residues 600–617 (LSVLRSFRLMRVFKLAKS) traverse the membrane as a helical segment. Residues 618-633 (WPTLNMLIKIIGNSVG) lie on the Cytoplasmic side of the membrane. A helical membrane pass occupies residues 634 to 652 (ALGNLTLVLAIIVFIFAVV). Topologically, residues 653-681 (GMQLFGKNYKDCVCRISEDCVLPRWHMND) are extracellular. Cysteine 666 and cysteine 672 are disulfide-bonded. An intramembrane region (pore-forming) is located at residues 682–702 (FFHAFLIIFRVLCGEWIESMW). At 703–713 (DCMEVSGQTMC) the chain is on the extracellular side. Residues cysteine 704 and cysteine 713 are joined by a disulfide bond. Residues 714–732 (LIVFMMVLVIGNLVVLNLF) traverse the membrane as a helical segment. Over 733–919 (LALLLSSFSG…TCFSIVENNY (187 aa)) the chain is Cytoplasmic. Positions 834–845 (SDSDDSDYDEDK) are enriched in acidic residues. Residues 834-862 (SDSDDSDYDEDKDSQCDESSVCSSVQKPE) are disordered. The III repeat unit spans residues 900–1215 (RGKIWCNIRR…KKYYNAMKKL (316 aa)). A helical membrane pass occupies residues 920–937 (FESFIVFMILLSSGALAF). The Extracellular segment spans residues 938–950 (EDIYLEKHQLIKS). Residues 951 to 969 (ILEYADKVFTYVFVMEMVL) traverse the membrane as a helical segment. Topologically, residues 970 to 983 (KWFAYGFKSYFSNA) are cytoplasmic. The helical transmembrane segment at 984 to 1002 (WCWLDFLIVDVSLVSLTAN) threads the bilayer. Residues 1003 to 1010 (ILGYSELG) are Extracellular-facing. The chain crosses the membrane as a helical span at residues 1011–1029 (AIKSLRTLRALRPLRALSR). Over 1030–1046 (FEGMRVVVNALVGAVPS) the chain is Cytoplasmic. A helical membrane pass occupies residues 1047 to 1066 (IFNVLLVCLIFWLIFSIMGV). At 1067–1119 (NLFAGKFSYCFNETSQEIIDTKVVDNKTECIALIKANFTEVRWKNVKVNYDNV) the chain is on the extracellular side. Residues cysteine 1076 and cysteine 1096 are joined by a disulfide bond. N-linked (GlcNAc...) asparagine glycans are attached at residues asparagine 1078 and asparagine 1092. Positions 1120 to 1141 (GIGYLSLLQVATFKGWTDIMYA) form an intramembrane region, pore-forming. The Extracellular segment spans residues 1142 to 1158 (AVDSRDVESQPIYEVNL). The chain crosses the membrane as a helical span at residues 1159–1180 (YMYLYFVIFIIFGSFFTLNLFI). The Cytoplasmic segment spans residues 1181-1243 (GVIIDNFNQQ…LVFDLVTKQI (63 aa)). Residues 1199–1201 (IFM) form an important for rapid channel inactivation region. An IV repeat occupies 1224–1521 (VPRPENPFQG…WEKFDPDASQ (298 aa)). Residues 1244–1261 (FDVFIMVLICLNMVTMMV) traverse the membrane as a helical segment. Topologically, residues 1262–1272 (ETDEQSDKKEE) are extracellular. Residues 1273–1291 (VLYWINVVFILIFTTECTL) form a helical membrane-spanning segment. At 1292 to 1303 (KIIALRRHYFSI) the chain is on the cytoplasmic side. The chain crosses the membrane as a helical span at residues 1304–1321 (GWNIFDFVVVILSILGLL). Residues 1322-1334 (LADIIEKYFVSPT) lie on the Extracellular side of the membrane. The helical transmembrane segment at 1335–1351 (LFRVIRLARIGRVLRLI) threads the bilayer. Topologically, residues 1352 to 1370 (RGAKGIRTLLFALMMSLPA) are cytoplasmic. The chain crosses the membrane as a helical span at residues 1371–1388 (LFNIGLLLFLIMFIFSIF). At 1389 to 1410 (GMSNFAYVKKEALIDDMFNFET) the chain is on the extracellular side. The pore-forming intramembrane region spans 1411–1433 (FGNSMICLFMITTSAGWDGLLSP). Topologically, residues 1434-1462 (IMNTPPDCDPNVENPGTTVRGNCGSPAIG) are extracellular. A disulfide bridge links cysteine 1441 with cysteine 1456. A helical transmembrane segment spans residues 1463–1485 (IAFFSTYIIMSFLVVVNMFIAII). Residues 1486–1719 (LENFNVATEE…QERDQRETSV (234 aa)) are Cytoplasmic-facing. In terms of domain architecture, IQ spans 1615–1644 (EEVAATVIQRAYRKYLLLRTVRLASFMYRE).

Belongs to the sodium channel (TC 1.A.1.10) family. Nav1.4/SCN4A subfamily. In terms of assembly, voltage-gated sodium (Nav) channels consist of an ion-conducting alpha subunit which is functional on its own associated with regulatory beta subunits.

The protein localises to the cell membrane. It catalyses the reaction Na(+)(in) = Na(+)(out). In terms of biological role, pore-forming subunit of a voltage-gated sodium (Nav) channel that directly mediates the depolarizing phase of action potentials in excitable membranes. Navs, also called VGSCs (voltage-gated sodium channels) or VDSCs (voltage-dependent sodium channels), operate by switching between closed and open conformations depending on the voltage difference across the membrane. In the open conformation they allow Na(+) ions to selectively pass through the pore, along their electrochemical gradient. The influx of Na+ ions provokes membrane depolarization, initiating the propagation of electrical signals throughout cells and tissues. This chain is Sodium channel protein type 4 subunit alpha B (scn4ab), found in Takifugu rubripes (Japanese pufferfish).